The sequence spans 1314 residues: Angiotensin-converting enzyme (1314 aa).

Residues 1–35 form the signal peptide; the sequence is MGAASGQRGQGPPSPLLLLWLSLLLLLLPPSPAPA. The Extracellular portion of the chain corresponds to 36 to 1265; the sequence is LDPGLQPGNF…LEPQQARVGQ (1230 aa). N-linked (GlcNAc...) asparagine glycans are attached at residues Asn-44, Asn-60, Asn-80, Asn-117, and Asn-166. Peptidase M2 domains are found at residues 46–630 and 649–1228; these read SADE…LGWP and VTDE…LGWP. A disulfide bridge links Cys-163 with Cys-171. Residue Tyr-237 participates in chloride binding. Asn-324 carries N-linked (GlcNAc...) asparagine glycosylation. An intrachain disulfide couples Cys-365 to Cys-383. Position 396 (His-396) interacts with Zn(2+). Catalysis depends on Glu-397, which acts as the Proton acceptor 1. Residues His-400 and Glu-424 each coordinate Zn(2+). N-linked (GlcNAc...) asparagine glycosylation occurs at Asn-515. Residue His-526 is the Proton donor 1 of the active site. Chloride is bound at residue Arg-535. Cys-551 and Cys-563 form a disulfide bridge. N-linked (GlcNAc...) asparagine glycans are attached at residues Asn-683, Asn-701, Asn-720, and Asn-766. Residues Cys-763 and Cys-769 are joined by a disulfide bond. Arg-797 and Tyr-835 together coordinate chloride. Asn-948 is a glycosylation site (N-linked (GlcNAc...) asparagine). Cys-963 and Cys-981 form a disulfide bridge. His-994 is a Zn(2+) binding site. The Proton acceptor 2 role is filled by Glu-995. 2 residues coordinate Zn(2+): His-998 and Glu-1022. 2 residues coordinate chloride: Trp-1096 and Arg-1100. His-1124 (proton donor 2) is an active-site residue. A chloride-binding site is contributed by Arg-1133. Residues Cys-1149 and Cys-1161 are joined by a disulfide bond. Residue Asn-1197 is glycosylated (N-linked (GlcNAc...) asparagine). The juxtamembrane stalk stretch occupies residues 1221-1262; the sequence is HGETLGWPEYNWTPNTARSEGPFPESGRVNFLGMYLEPQQAR. The chain crosses the membrane as a helical span at residues 1266–1282; sequence WVLLFLGVSLLVATLGL. The Cytoplasmic segment spans residues 1283 to 1314; sequence THRLFSIRQHGHSLHRPHRGPQFGSEVELRHS. Positions 1293 to 1314 are disordered; the sequence is GHSLHRPHRGPQFGSEVELRHS. Position 1307 is a phosphoserine (Ser-1307).

Belongs to the peptidase M2 family. Monomer and homodimer; homodimerizes following binding to an inhibitor. Interacts with calmodulin (CALM1, CALM2 or CALM3); interaction takes place in the cytoplasmic region and regulates phosphorylation and proteolytic cleavage. Zn(2+) serves as cofactor. It depends on chloride as a cofactor. Post-translationally, produced following proteolytic cleavage by secretase enzymes that cleave the transmembrane form in the juxtamembrane stalk region upstream of the transmembrane region. Cleavage can take place at different sites of the juxtamembrane stalk region. In terms of processing, phosphorylated by CK2 on Ser-1307; which allows membrane retention. Phosphorylated on tyrosine residues on its extracellular part, promoting cleavage by secretase enzymes and formation of the soluble form (Angiotensin-converting enzyme, soluble form). As to expression, widely expressed with dominant expression in lung and kidney.

It is found in the cell membrane. Its subcellular location is the cytoplasm. It localises to the secreted. The catalysed reaction is Release of a C-terminal dipeptide, oligopeptide-|-Xaa-Yaa, when Xaa is not Pro, and Yaa is neither Asp nor Glu. Thus, conversion of angiotensin I to angiotensin II, with increase in vasoconstrictor activity, but no action on angiotensin II.. It catalyses the reaction angiotensin I + H2O = L-histidyl-L-leucine + angiotensin II. It carries out the reaction bradykinin + H2O = L-Phe-L-Arg + bradykinin(1-7). The enzyme catalyses substance P + H2O = substance P(1-9) + L-Leu-L-Met-NH2. The catalysed reaction is substance P + H2O = substance P(1-8) + Gly-L-Leu-L-Met-NH2. It catalyses the reaction substance P + H2O = L-Phe-L-Phe-Gly-L-Leu-L-Met-NH2 + substance P(1-6). It carries out the reaction neurotensin + H2O = neurotensin(1-11) + L-isoleucyl-L-leucine. The enzyme catalyses goralatide + H2O = N-acetyl-L-seryl-L-aspartate + L-lysyl-L-proline. The catalysed reaction is Met-enkephalin + H2O = L-phenylalanyl-L-methionine + L-tyrosylglycylglycine. It catalyses the reaction Leu-enkephalin + H2O = L-tyrosylglycylglycine + L-phenylalanyl-L-leucine. It carries out the reaction Met-enkephalin-Arg-Phe + H2O = L-arginyl-L-phenylalanine + Met-enkephalin. The dipeptidyl carboxypeptidase activity is strongly activated by chloride. The dipeptidyl carboxypeptidase activity is specifically inhibited by lisinopril, captopril and enalaprilat. With respect to regulation, strongly inhibited by lisinopril and captopril. In terms of biological role, dipeptidyl carboxypeptidase that removes dipeptides from the C-terminus of a variety of circulating hormones, such as angiotensin I, bradykinin or enkephalins, thereby playing a key role in the regulation of blood pressure, electrolyte homeostasis or synaptic plasticity. Composed of two similar catalytic domains, each possessing a functional active site, with different selectivity for substrates. Plays a major role in the angiotensin-renin system that regulates blood pressure and sodium retention by the kidney by converting angiotensin I to angiotensin II, resulting in an increase of the vasoconstrictor activity of angiotensin. Also able to inactivate bradykinin, a potent vasodilator, and therefore enhance the blood pressure response. Acts as a regulator of synaptic transmission by mediating cleavage of neuropeptide hormones, such as substance P, neurotensin or enkephalins. Catalyzes degradation of different enkephalin neuropeptides (Met-enkephalin, Leu-enkephalin, Met-enkephalin-Arg-Phe and possibly Met-enkephalin-Arg-Gly-Leu). Acts as a regulator of synaptic plasticity in the nucleus accumbens of the brain by mediating cleavage of Met-enkephalin-Arg-Phe, a strong ligand of Mu-type opioid receptor OPRM1, into Met-enkephalin. Met-enkephalin-Arg-Phe cleavage by ACE decreases activation of OPRM1, leading to long-term synaptic potentiation of glutamate release. Also acts as a regulator of hematopoietic stem cell differentiation by mediating degradation of hemoregulatory peptide N-acetyl-SDKP (AcSDKP). Acts as a regulator of cannabinoid signaling pathway by mediating degradation of hemopressin, an antagonist peptide of the cannabinoid receptor CNR1. Involved in amyloid-beta metabolism by catalyzing degradation of Amyloid-beta protein 40 and Amyloid-beta protein 42 peptides, thereby preventing plaque formation. Catalyzes cleavage of cholecystokinin (maturation of Cholecystokinin-8 and Cholecystokinin-5) and Gonadoliberin-1 (both maturation and degradation) hormones. Degradation of hemoregulatory peptide N-acetyl-SDKP (AcSDKP) and amyloid-beta proteins is mediated by the N-terminal catalytic domain, while angiotensin I and cholecystokinin cleavage is mediated by the C-terminal catalytic region. Soluble form that is released in blood plasma and other body fluids following proteolytic cleavage in the juxtamembrane stalk region. Its function is as follows. Isoform produced by alternative promoter usage that is specifically expressed in spermatocytes and adult testis, and which is required for male fertility. In contrast to somatic isoforms, only contains one catalytic domain. Acts as a dipeptidyl carboxypeptidase that removes dipeptides from the C-terminus of substrates. The identity of substrates that are needed for male fertility is unknown. May also have a glycosidase activity which releases GPI-anchored proteins from the membrane by cleaving the mannose linkage in the GPI moiety. The GPIase activity was reported to be essential for the egg-binding ability of the sperm. This activity is however unclear and has been challenged by other groups, suggesting that it may be indirect. This chain is Angiotensin-converting enzyme, found in Mesocricetus auratus (Golden hamster).